Reading from the N-terminus, the 621-residue chain is Inositol-pentakisphosphate 2-kinase (621 aa).

Disordered stretches follow at residues 1–20, 87–111, and 201–226; these read MTAERGPRSPGTGQKLRLRA, RHELADEVARPEGQRVSSERAGTEN, and TGDESGAAAGVGDGGGVGRGAGTRTK. Over residues 87–108 the composition is skewed to basic and acidic residues; the sequence is RHELADEVARPEGQRVSSERAG. Gly residues predominate over residues 209-221; the sequence is AGVGDGGGVGRGA. The EXKPK motif motif lies at 241 to 245; that stretch reads EIKPK. 2 disordered regions span residues 391 to 416 and 514 to 565; these read SKRAEGSNQSQKQQQEQPEPEQLNQS and TAMA…QNNK. Low complexity-rich tracts occupy residues 397–416 and 529–539; these read SNQSQKQQQEQPEPEQLNQS and ETPAEAASTTS. Polar residues predominate over residues 540–565; the sequence is RNVNQNESQKLNRNEPANQTQAQNNK.

This sequence belongs to the IPK1 type 2 family.

The catalysed reaction is 1D-myo-inositol 1,3,4,5,6-pentakisphosphate + ATP = 1D-myo-inositol hexakisphosphate + ADP + H(+). Its function is as follows. Contributes to the formation of Ins(1,2,3,4,5,6)P6 (InsP6, IP6 or phytate). Phosphorylates Ins(1,3,4,5,6)P5 at position 2 to form InsP6. Together with Ipk2, they are the main contributors to higher InsP synthesis. This chain is Inositol-pentakisphosphate 2-kinase (Ipk1), found in Drosophila melanogaster (Fruit fly).